Consider the following 298-residue polypeptide: UTP--glucose-1-phosphate uridylyltransferase (298 aa).

This sequence belongs to the UDPGP type 2 family.

The enzyme catalyses alpha-D-glucose 1-phosphate + UTP + H(+) = UDP-alpha-D-glucose + diphosphate. It participates in carbohydrate metabolism; nucleotide-sugar metabolism. Its pathway is capsule biogenesis; capsule polysaccharide biosynthesis. This Klebsiella pneumoniae protein is UTP--glucose-1-phosphate uridylyltransferase (galF).